The chain runs to 1119 residues: Protein translocase subunit SecA (1119 aa).

ATP-binding positions include Q175, 213-217 (GEGKT), and D714. Residues C1106, C1108, C1117, and C1118 each coordinate Zn(2+).

The protein belongs to the SecA family. In terms of assembly, monomer and homodimer. Part of the essential Sec protein translocation apparatus which comprises SecA, SecYEG and auxiliary proteins SecDF. Other proteins may also be involved. Zn(2+) serves as cofactor.

The protein resides in the cell inner membrane. It localises to the cytoplasm. The enzyme catalyses ATP + H2O + cellular proteinSide 1 = ADP + phosphate + cellular proteinSide 2.. Its function is as follows. Part of the Sec protein translocase complex. Interacts with the SecYEG preprotein conducting channel. Has a central role in coupling the hydrolysis of ATP to the transfer of proteins into and across the cell membrane, serving as an ATP-driven molecular motor driving the stepwise translocation of polypeptide chains across the membrane. This chain is Protein translocase subunit SecA, found in Azobacteroides pseudotrichonymphae genomovar. CFP2.